Consider the following 3953-residue polypeptide: Zinc finger protein 469 (3953 aa).

14 disordered regions span residues 1–274 (MPGE…VSFQ), 313–465 (WPEE…MFFN), 512–672 (EWQG…FPFP), 763–784 (GHQR…RVPA), 869–1383 (ADEE…HSEL), 1400–1461 (PKPS…DLPV), 1575–1610 (LQRS…SQRR), 1703–1864 (SKTG…GASS), 1884–1947 (VSNT…TVEG), 1991–2030 (KTQG…TGPT), 2070–2700 (LTAA…TLGP), 2716–2915 (AGET…LSDS), 3001–3036 (EMPA…PGNT), and 3072–3110 (GPSF…PAKG). Over residues 187–198 (PPSSFTSTNYTS) the composition is skewed to polar residues. Pro residues-rich tracts occupy residues 202 to 211 (TPRPPAPGPP) and 324 to 335 (YPLPTQPAPSPL). Residues 603–623 (STCSSLSPMSSSPANPSSEES) are compositionally biased toward low complexity. 2 stretches are compositionally biased toward pro residues: residues 768 to 780 (PGPP…PAAP) and 896 to 911 (KAPP…PQTP). A compositionally biased stretch (basic residues) spans 944–953 (QQRRGKQLKL). Over residues 963–975 (AAEGSGSGGGGRA) the composition is skewed to gly residues. The segment covering 981-991 (RRNDGLGERPP) has biased composition (basic and acidic residues). The span at 1005–1017 (RADPAPRVPRAAA) shows a compositional bias: low complexity. Basic residues-rich tracts occupy residues 1025–1042 (SRRR…RKAR) and 1058–1070 (KNRR…RRAG). Residues 1082–1093 (PGAEDRRLREYD) show a composition bias toward basic and acidic residues. The span at 1094 to 1103 (FASESEEDEQ) shows a compositional bias: acidic residues. A compositionally biased stretch (basic and acidic residues) spans 1120 to 1137 (KRKEVELTQGPREDEPQK). Over residues 1158 to 1177 (PGGSRPGPGRSPQARGPSRS) the composition is skewed to low complexity. Residues 1213-1229 (EETRPSLDFPQEAKEPE) show a composition bias toward basic and acidic residues. Composition is skewed to polar residues over residues 1278–1290 (PKPS…TAPH) and 1333–1350 (NPSS…SKIS). Residues 1577–1595 (RSKDTRGAPRELAEAESVG) show a composition bias toward basic and acidic residues. Composition is skewed to polar residues over residues 1991–2005 (KTQG…QPEN) and 2014–2024 (NHASVNASPKT). The span at 2243-2262 (DTPKDSTLRIPEDSRKEKLW) shows a compositional bias: basic and acidic residues. Residues 2409-2435 (TAPSSTASDFQSDSPQSHRNASHQTPQ) show a composition bias toward polar residues. A C2H2-type 1 zinc finger spans residues 2472–2498 (VTCEVCAASFRSGPGLSRHKARKHRPH). Residues 2488–2498 (SRHKARKHRPH) are compositionally biased toward basic residues. Over residues 2506 to 2521 (SPAALPAQQPLEPLAQ) the composition is skewed to low complexity. Positions 2534–2546 (SGKERPNHSRGDP) are enriched in basic and acidic residues. Residues 2565–2574 (PGSPHSQQLH) are compositionally biased toward low complexity. Residues 2592 to 2631 (PRPDQAREDELHPKQAEKREGRRWRREPTVDSPSHSEGKS) are compositionally biased toward basic and acidic residues. The segment covering 2632-2642 (NKKRGKLRGRR) has biased composition (basic residues). The segment covering 2664 to 2676 (PSPAMASYAASPS) has biased composition (low complexity). The segment covering 2777–2787 (DSSRAHSRSEE) has biased composition (basic and acidic residues). Low complexity predominate over residues 2805 to 2816 (TSSSPADSTTSS). Residues 2869–2879 (LTRKRNPHVYG) are compositionally biased toward basic residues. Residues 3095-3105 (AAGAGRAQGRG) show a composition bias toward low complexity. The C2H2-type 2 zinc finger occupies 3115–3137 (YKCKVCFQRFRSLGELDLHKLAH). Residues 3232 to 3322 (TEPAPKHHRG…PDPWAGGEPL (91 aa)) are disordered. Basic and acidic residues predominate over residues 3260–3272 (GEAKKDSPGERAK). The segment covering 3302 to 3314 (PGPPRTTPSPSPD) has biased composition (pro residues). 2 C2H2-type zinc fingers span residues 3337–3359 (RDCH…LAVH) and 3365–3388 (YLCP…GGAH). The C2H2-type 5; degenerate zinc finger occupies 3418–3442 (FACSSCNYTFAKKEQFDRHMNKHLR). Disordered regions lie at residues 3448–3501 (FAFR…PILS), 3518–3559 (STTK…SPFP), and 3576–3925 (ERPE…HRTA). The segment covering 3584–3602 (PGSPGPLLQQALPLGASLP) has biased composition (low complexity). A compositionally biased stretch (basic and acidic residues) spans 3633-3651 (CAPDHFQEDHLLQKEKEVS). 2 stretches are compositionally biased toward low complexity: residues 3728–3741 (PGPS…PRPG) and 3749–3759 (QPQPASGQLQS). 2 stretches are compositionally biased toward basic and acidic residues: residues 3876-3892 (EQRK…DRLG) and 3915-3925 (EPAEPHTHRTA).

The protein belongs to the krueppel C2H2-type zinc-finger protein family. In terms of tissue distribution, detected in cornea, sclera, skin fibroblasts and striated muscle.

Its subcellular location is the nucleus. In terms of biological role, may be involved in transcriptional regulation. In Homo sapiens (Human), this protein is Zinc finger protein 469 (ZNF469).